The sequence spans 312 residues: Dihydroorotate dehydrogenase B (NAD(+)), catalytic subunit (312 aa).

Residues Ser-23 and 47 to 48 (KA) each bind FMN. Substrate is bound by residues Lys-47 and 71 to 75 (NAIGL). Positions 102 and 130 each coordinate FMN. Asn-130 is a substrate binding site. The Nucleophile role is filled by Cys-133. FMN contacts are provided by Lys-168 and Ile-194. 195 to 196 (NT) is a substrate binding site. FMN-binding positions include Gly-220, 246-247 (GG), and 268-269 (GT).

It belongs to the dihydroorotate dehydrogenase family. Type 1 subfamily. Heterotetramer of 2 PyrK and 2 PyrD type B subunits. FMN serves as cofactor.

Its subcellular location is the cytoplasm. The enzyme catalyses (S)-dihydroorotate + NAD(+) = orotate + NADH + H(+). The protein operates within pyrimidine metabolism; UMP biosynthesis via de novo pathway; orotate from (S)-dihydroorotate (NAD(+) route): step 1/1. Catalyzes the conversion of dihydroorotate to orotate with NAD(+) as electron acceptor. The sequence is that of Dihydroorotate dehydrogenase B (NAD(+)), catalytic subunit (pyrDB) from Enterococcus faecalis (strain ATCC 47077 / OG1RF).